A 172-amino-acid polypeptide reads, in one-letter code: Lipoprotein signal peptidase (172 aa).

The next 3 membrane-spanning stretches (helical) occupy residues 10 to 30, 68 to 88, and 98 to 118; these read LIWL…KAWV, WQLW…AFWL, and SALP…DRLM. Catalysis depends on residues Asp-124 and Asp-142. The helical transmembrane segment at 138–158 threads the bilayer; sequence FNIADSAIVGGAIGIAVFGLF.

Belongs to the peptidase A8 family.

It is found in the cell inner membrane. It carries out the reaction Release of signal peptides from bacterial membrane prolipoproteins. Hydrolyzes -Xaa-Yaa-Zaa-|-(S,diacylglyceryl)Cys-, in which Xaa is hydrophobic (preferably Leu), and Yaa (Ala or Ser) and Zaa (Gly or Ala) have small, neutral side chains.. It participates in protein modification; lipoprotein biosynthesis (signal peptide cleavage). In terms of biological role, this protein specifically catalyzes the removal of signal peptides from prolipoproteins. The polypeptide is Lipoprotein signal peptidase (Xanthomonas euvesicatoria pv. vesicatoria (strain 85-10) (Xanthomonas campestris pv. vesicatoria)).